Reading from the N-terminus, the 407-residue chain is Methylthioribose kinase (407 aa).

ATP is bound by residues Asn-40, Lys-57, and 111–113 (EDL). Asp-229 serves as a coordination point for substrate. 246–248 (DAE) serves as a coordination point for ATP. Arg-344 is a binding site for substrate.

It belongs to the methylthioribose kinase family. As to quaternary structure, homodimer.

The enzyme catalyses 5-(methylsulfanyl)-D-ribose + ATP = 5-(methylsulfanyl)-alpha-D-ribose 1-phosphate + ADP + H(+). The protein operates within amino-acid biosynthesis; L-methionine biosynthesis via salvage pathway; S-methyl-5-thio-alpha-D-ribose 1-phosphate from S-methyl-5'-thioadenosine (hydrolase route): step 2/2. Its function is as follows. Catalyzes the phosphorylation of methylthioribose into methylthioribose-1-phosphate. The sequence is that of Methylthioribose kinase from Yersinia pseudotuberculosis serotype O:3 (strain YPIII).